We begin with the raw amino-acid sequence, 327 residues long: Cyclin-A3-3 (327 aa).

Belongs to the cyclin family. Cyclin AB subfamily.

This Arabidopsis thaliana (Mouse-ear cress) protein is Cyclin-A3-3 (CYCA3-3).